A 431-amino-acid polypeptide reads, in one-letter code: Serine hydroxymethyltransferase (431 aa).

Residues Leu128 and 132–134 (GHL) each bind (6S)-5,6,7,8-tetrahydrofolate. The residue at position 237 (Lys237) is an N6-(pyridoxal phosphate)lysine.

This sequence belongs to the SHMT family. As to quaternary structure, homodimer. The cofactor is pyridoxal 5'-phosphate.

It localises to the cytoplasm. The enzyme catalyses (6R)-5,10-methylene-5,6,7,8-tetrahydrofolate + glycine + H2O = (6S)-5,6,7,8-tetrahydrofolate + L-serine. The protein operates within one-carbon metabolism; tetrahydrofolate interconversion. It participates in amino-acid biosynthesis; glycine biosynthesis; glycine from L-serine: step 1/1. Catalyzes the reversible interconversion of serine and glycine with tetrahydrofolate (THF) serving as the one-carbon carrier. This reaction serves as the major source of one-carbon groups required for the biosynthesis of purines, thymidylate, methionine, and other important biomolecules. Also exhibits THF-independent aldolase activity toward beta-hydroxyamino acids, producing glycine and aldehydes, via a retro-aldol mechanism. The protein is Serine hydroxymethyltransferase of Ruegeria sp. (strain TM1040) (Silicibacter sp.).